Consider the following 126-residue polypeptide: Histone H2B type 1-K (126 aa).

The span at Met-1–Lys-12 shows a compositional bias: low complexity. A disordered region spans residues Met-1–Glu-36. Pro-2 is modified (N-acetylproline). Position 3 is an ADP-ribosyl glutamic acid (Glu-3). Position 6 is an N6-(2-hydroxyisobutyryl)lysine; alternate (Lys-6). The residue at position 6 (Lys-6) is an N6-(beta-hydroxybutyryl)lysine; alternate. Residue Lys-6 is modified to N6-acetyllysine; alternate. An N6-butyryllysine; alternate modification is found at Lys-6. Lys-6 carries the N6-crotonyllysine; alternate modification. Position 6 is an N6-lactoyllysine; alternate (Lys-6). Lys-6 is covalently cross-linked (Glycyl lysine isopeptide (Lys-Gly) (interchain with G-Cter in SUMO2); alternate). Ser-7 bears the ADP-ribosylserine mark. An N6-(beta-hydroxybutyryl)lysine; alternate modification is found at Lys-12. Lys-12 and Lys-13 each carry N6-acetyllysine; alternate. Residues Lys-12 and Lys-13 each carry the N6-crotonyllysine; alternate modification. At Lys-12 the chain carries N6-lactoyllysine; alternate. N6-(2-hydroxyisobutyryl)lysine; alternate is present on Lys-13. A Phosphoserine; by STK4/MST1 modification is found at Ser-15. N6-acetyllysine; alternate is present on residues Lys-16, Lys-17, Lys-21, and Lys-24. 4 positions are modified to N6-crotonyllysine; alternate: Lys-16, Lys-17, Lys-21, and Lys-24. Residues Lys-16, Lys-17, Lys-21, and Lys-24 each carry the N6-lactoyllysine; alternate modification. N6-glutaryllysine; alternate is present on Lys-17. N6-(2-hydroxyisobutyryl)lysine; alternate occurs at positions 21 and 24. Lys-21 carries the N6-(beta-hydroxybutyryl)lysine; alternate modification. Lys-21 bears the N6-butyryllysine; alternate mark. Lys-21 is covalently cross-linked (Glycyl lysine isopeptide (Lys-Gly) (interchain with G-Cter in SUMO2); alternate). N6-(2-hydroxyisobutyryl)lysine is present on Lys-25. Position 35 is an N6-(2-hydroxyisobutyryl)lysine; alternate (Lys-35). Residue Lys-35 is modified to N6-(beta-hydroxybutyryl)lysine; alternate. Lys-35 carries the N6-crotonyllysine; alternate modification. N6-glutaryllysine; alternate is present on Lys-35. Lys-35 carries the post-translational modification N6-succinyllysine; alternate. Residue Lys-35 forms a Glycyl lysine isopeptide (Lys-Gly) (interchain with G-Cter in ubiquitin); alternate linkage. Glu-36 bears the PolyADP-ribosyl glutamic acid mark. Phosphoserine; by AMPK is present on Ser-37. Lys-44, Lys-47, and Lys-58 each carry N6-(2-hydroxyisobutyryl)lysine; alternate. Lys-44 carries the N6-lactoyllysine; alternate modification. Residues Lys-44 and Lys-47 each carry the N6-glutaryllysine; alternate modification. Lys-47 carries the post-translational modification N6-methyllysine; alternate. An N6,N6-dimethyllysine; alternate modification is found at Lys-58. Arg-80 is subject to Dimethylated arginine. Lys-86 carries the post-translational modification N6-(2-hydroxyisobutyryl)lysine; alternate. At Lys-86 the chain carries N6-acetyllysine; alternate. Lys-86 carries the post-translational modification N6-lactoyllysine; alternate. Lys-86 is subject to N6,N6,N6-trimethyllysine; alternate. 2 positions are modified to omega-N-methylarginine: Arg-87 and Arg-93. Residue Lys-109 is modified to N6-(2-hydroxyisobutyryl)lysine; alternate. Residue Lys-109 is modified to N6-(beta-hydroxybutyryl)lysine; alternate. Residue Lys-109 is modified to N6-lactoyllysine; alternate. At Lys-109 the chain carries N6-glutaryllysine; alternate. Position 109 is an N6-methyllysine; alternate (Lys-109). Ser-113 carries an O-linked (GlcNAc) serine glycan. Thr-116 bears the Phosphothreonine mark. Residues Lys-117 and Lys-121 each carry the N6-(2-hydroxyisobutyryl)lysine; alternate modification. An N6-(beta-hydroxybutyryl)lysine; alternate modification is found at Lys-117. 2 positions are modified to N6-lactoyllysine; alternate: Lys-117 and Lys-121. Residues Lys-117 and Lys-121 each carry the N6-glutaryllysine; alternate modification. Residues Lys-117 and Lys-121 each carry the N6-succinyllysine; alternate modification. Residue Lys-117 is modified to N6-methylated lysine; alternate. Lys-121 is covalently cross-linked (Glycyl lysine isopeptide (Lys-Gly) (interchain with G-Cter in ubiquitin); alternate).

It belongs to the histone H2B family. In terms of assembly, the nucleosome is a histone octamer containing two molecules each of H2A, H2B, H3 and H4 assembled in one H3-H4 heterotetramer and two H2A-H2B heterodimers. The octamer wraps approximately 147 bp of DNA. In terms of processing, monoubiquitination at Lys-35 (H2BK34Ub) by the MSL1/MSL2 dimer is required for histone H3 'Lys-4' (H3K4me) and 'Lys-79' (H3K79me) methylation and transcription activation at specific gene loci, such as HOXA9 and MEIS1 loci. Similarly, monoubiquitination at Lys-121 (H2BK120Ub) by the RNF20/40 complex gives a specific tag for epigenetic transcriptional activation and is also prerequisite for histone H3 'Lys-4' and 'Lys-79' methylation. It also functions cooperatively with the FACT dimer to stimulate elongation by RNA polymerase II. H2BK120Ub also acts as a regulator of mRNA splicing: deubiquitination by USP49 is required for efficient cotranscriptional splicing of a large set of exons. Phosphorylated on Ser-15 (H2BS14ph) by STK4/MST1 during apoptosis; which facilitates apoptotic chromatin condensation. Also phosphorylated on Ser-15 in response to DNA double strand breaks (DSBs), and in correlation with somatic hypermutation and immunoglobulin class-switch recombination. Phosphorylation at Ser-37 (H2BS36ph) by AMPK in response to stress promotes transcription. Post-translationally, glcNAcylation at Ser-113 promotes monoubiquitination of Lys-121. It fluctuates in response to extracellular glucose, and associates with transcribed genes. In terms of processing, ADP-ribosylated by PARP1 or PARP2 on Ser-7 (H2BS6ADPr) in response to DNA damage. H2BS6ADPr promotes recruitment of CHD1L. Mono-ADP-ribosylated on Glu-3 (H2BE2ADPr) by PARP3 in response to single-strand breaks. Poly ADP-ribosylation on Glu-36 (H2BE35ADPr) by PARP1 regulates adipogenesis: it inhibits phosphorylation at Ser-37 (H2BS36ph), thereby blocking expression of pro-adipogenetic genes. Crotonylation (Kcr) is specifically present in male germ cells and marks testis-specific genes in post-meiotic cells, including X-linked genes that escape sex chromosome inactivation in haploid cells. Crotonylation marks active promoters and enhancers and confers resistance to transcriptional repressors. It is also associated with post-meiotically activated genes on autosomes. Post-translationally, hydroxybutyrylation of histones is induced by starvation. In terms of processing, lactylated in macrophages by EP300/P300 by using lactoyl-CoA directly derived from endogenous or exogenous lactate, leading to stimulates gene transcription.

The protein localises to the nucleus. It is found in the chromosome. Functionally, core component of nucleosome. Nucleosomes wrap and compact DNA into chromatin, limiting DNA accessibility to the cellular machineries which require DNA as a template. Histones thereby play a central role in transcription regulation, DNA repair, DNA replication and chromosomal stability. DNA accessibility is regulated via a complex set of post-translational modifications of histones, also called histone code, and nucleosome remodeling. This is Histone H2B type 1-K from Mus musculus (Mouse).